We begin with the raw amino-acid sequence, 250 residues long: Cell division protein ZapD (250 aa).

Belongs to the ZapD family. Interacts with FtsZ.

Its subcellular location is the cytoplasm. Its function is as follows. Cell division factor that enhances FtsZ-ring assembly. Directly interacts with FtsZ and promotes bundling of FtsZ protofilaments, with a reduction in FtsZ GTPase activity. This Bordetella petrii (strain ATCC BAA-461 / DSM 12804 / CCUG 43448) protein is Cell division protein ZapD.